The primary structure comprises 1331 residues: MVEVSEKPNTQDDGVSKQENRNPASSSSSTSDKEKVAKKGNSDATKSSTPEDLDAQLAHLPEHEREILKQQLFIPDAKATYGTLFRYATRNDMIFLAIVSLASIAAGAALPLFTVLFGSLAGTFRDIALHRITYDEFNSILTRNSLYFVYLGIAQFILLYVSTVGFIYVGEHITQKIRAKYLHAILRQNIGFFDKLGAGEVTTRITADTNLIQDGISEKVGLTLTALSTFFSAFIIGYVRYWKLALICSSTIVAMILVMGGISRFVVKSGRMTLVSYGEGGTVAEEVISSIRNATAFGTQEKLARQYEVHLKEARKWGRRLQMMLGIMFGSMMAIMYSNYGLGFWMGSRFLVGGETDLSAIVNILLAIVIGSFSIGNVAPNTQAFASAISAGAKIFSTIDRVSAIDPGSDEGDTIENVEGTIEFRGIKHIYPSRPEVVVMEDINLVVPKGKTTALVGPSGSGKSTVVGLLERFYNPVSGSVLLDGRDIKTLNLRWLRQQISLVSQEPTLFGTTIFENIRLGLIGSPMENESEEQIKERIVSAAKEANAHDFIMGLPDGYATDVGQRGFLLSGGQKQRIAIARAIVSDPKILLLDEATSALDTKSEGVVQAALDAASRGRTTIVIAHRLSTIKSADNIVVIVGGRIAEQGTHDELVDKKGTYLQLVEAQKINEERGEESEDEAVLEKEKEISRQISVPAKSVNSGKYPDEDVEANLGRIDTKKSLSSVILSQKRSQEKETEYSLGTLIRFIAGFNKPERLIMLCGFFFAVLSGAGQPVQSVFFAKGITTLSLPPSLYGKLREDANFWSLMFLMLGLVQLVTQSAQGVIFAICSESLIYRARSKSFRAMLRQDIAFFDLPENSTGALTSFLSTETKHLSGVSGATLGTILMVSTTLIVALTVALAFGWKLALVCISTVPVLLLCGFYRFWILAQFQTRAKKAYESSASYACEATSSIRTVASLTREQGVMEIYEGQLNDQAKKSLRSVAKSSLLYAASQSFSFFCLALGFWYGGGLLGKGEYNAFQFFLCISCVIFGSQSAGIVFSFSPDMGKAKSAAADFKRLFDRVPTIDIESPDGEKLETVEGTIEFRDVHFRYPTRPEQPVLRGLNLTVKPGQYIALVGPSGCGKSTTIALVERFYDTLSGGVYIDGKDISRLNVNSYRSHLALVSQEPTLYQGTIRDNVLLGVDRDDVPDEQVFAACKAANIYDFIMSLPDGFGTVVGSKGSMLSGGQKQRIAIARALIRDPKVLLLDEATSALDSESEKVVQAALDAAAKGRTTIAVAHRLSTIQKADIIYVFDQGRIVESGTHHELLQNKGRYYELVHMQSLEKTQ.

Basic and acidic residues-rich tracts occupy residues 1–20 (MVEVSEKPNTQDDGVSKQEN) and 31–41 (SDKEKVAKKGN). The tract at residues 1–51 (MVEVSEKPNTQDDGVSKQENRNPASSSSSTSDKEKVAKKGNSDATKSSTPE) is disordered. 4 consecutive transmembrane segments (helical) span residues 93-113 (MIFLAIVSLASIAAGAALPLF), 147-167 (YFVYLGIAQFILLYVSTVGFI), 219-239 (KVGLTLTALSTFFSAFIIGYV), and 242-262 (WKLALICSSTIVAMILVMGGI). Residues 97 to 387 (AIVSLASIAA…VAPNTQAFAS (291 aa)) form the ABC transmembrane type-1 1 domain. N-linked (GlcNAc...) asparagine glycosylation is present at N293. The next 2 helical transmembrane spans lie at 325–345 (LGIMFGSMMAIMYSNYGLGFW) and 358–378 (LSAIVNILLAIVIGSFSIGNV). One can recognise an ABC transporter 1 domain in the interval 422–667 (IEFRGIKHIY…KGTYLQLVEA (246 aa)). ATP is bound at residue 457 to 464 (GPSGSGKS). A glycan (N-linked (GlcNAc...) asparagine) is linked at N529. The next 2 membrane-spanning stretches (helical) occupy residues 762–782 (LCGFFFAVLSGAGQPVQSVFF) and 810–830 (FLMLGLVQLVTQSAQGVIFAI). One can recognise an ABC transmembrane type-1 2 domain in the interval 764-1051 (GFFFAVLSGA…VFSFSPDMGK (288 aa)). N860 is a glycosylation site (N-linked (GlcNAc...) asparagine). 4 consecutive transmembrane segments (helical) span residues 884–904 (LGTILMVSTTLIVALTVALAF), 910–930 (LVCISTVPVLLLCGFYRFWIL), 995–1015 (ASQSFSFFCLALGFWYGGGLL), and 1025–1045 (FFLCISCVIFGSQSAGIVFSF). An ABC transporter 2 domain is found at 1086–1324 (IEFRDVHFRY…KGRYYELVHM (239 aa)). N-linked (GlcNAc...) asparagine glycosylation occurs at N1108. 1121–1128 (GPSGCGKS) lines the ATP pocket.

This sequence belongs to the ABC transporter superfamily. ABCB family. Multidrug resistance exporter (TC 3.A.1.201) subfamily.

The protein localises to the cell membrane. It carries out the reaction itraconazole(in) + ATP + H2O = itraconazole(out) + ADP + phosphate + H(+). Pleiotropic ABC efflux transporter that may be involved in the modulation susceptibility to a wide range of unrelated cytotoxic compounds, including terbinafine, 4-nitroquinoline N-oxide, and ethidium bromide. May play a role in pathogenicity. The sequence is that of ABC multidrug transporter MDR2 from Trichophyton interdigitale (strain MR816).